The following is a 145-amino-acid chain: MGAFTDKQEALVSSSFEAFKTNIPQYSVVFYTSILEKAPVAKDLFSFLANGVDPTNPKLTGHAEKLFGLVRDSAGQLKASGTVVIDAALGSIHAQKAITDPQFVVVKEALLKTIKEAVGDKWSDELSSAWEVAYDELAAAIKKAF.

Gly-2 is subject to N-acetylglycine. Residues 3-145 (AFTDKQEALV…ELAAAIKKAF (143 aa)) form the Globin domain. Nitrated tyrosine occurs at positions 26 and 31. Ser-46 provides a ligand contact to heme b. The residue at position 46 (Ser-46) is a Phosphoserine. His-62 is an O2 binding site. Lys-65, His-93, and Lys-96 together coordinate heme b. Tyr-134 bears the Nitrated tyrosine mark.

It belongs to the plant globin family. In terms of assembly, monomer. Nitrated mainly at Tyr-31 and, to a lower extent, at Tyr-26 and Tyr-134, in effective nodules and particularly in hypoxic conditions; this mechanism may play a protective role in the symbiosis by buffering toxic peroxynitrite NO(2)(-). Nitration level decrease during nodule senescence. Post-translationally, phosphorylation at Ser-46 disrupts the molecular environment of its porphyrin ring oxygen binding pocket, thus leading to a reduced oxygen consumption and to the delivery of oxygen O(2) to symbiosomes. In terms of tissue distribution, specifically expressed in root nodules, and barely in pods.

It is found in the cytoplasm. It localises to the cytosol. The protein resides in the nucleus. Its function is as follows. Leghemoglobin that reversibly binds oxygen O(2) through a pentacoordinated heme iron. In root nodules, facilitates the diffusion of oxygen to the bacteroids while preventing the bacterial nitrogenase from being inactivated by buffering dioxygen, nitric oxide and carbon monoxide, and promoting the formation of reactive oxygen species (ROS, e.g. H(2)O(2)). This role is essential for symbiotic nitrogen fixation (SNF). The chain is Leghemoglobin 1 from Glycine max (Soybean).